Reading from the N-terminus, the 314-residue chain is Homoserine O-succinyltransferase (314 aa).

C142 serves as the catalytic Acyl-thioester intermediate. The substrate site is built by K163 and S192. Catalysis depends on H235, which acts as the Proton acceptor. E237 is a catalytic residue. R249 serves as a coordination point for substrate.

Belongs to the MetA family.

The protein localises to the cytoplasm. The catalysed reaction is L-homoserine + succinyl-CoA = O-succinyl-L-homoserine + CoA. It participates in amino-acid biosynthesis; L-methionine biosynthesis via de novo pathway; O-succinyl-L-homoserine from L-homoserine: step 1/1. Functionally, transfers a succinyl group from succinyl-CoA to L-homoserine, forming succinyl-L-homoserine. The polypeptide is Homoserine O-succinyltransferase (Photobacterium profundum (strain SS9)).